A 428-amino-acid chain; its full sequence is Glutamate-1-semialdehyde 2,1-aminomutase (428 aa).

Lysine 265 carries the N6-(pyridoxal phosphate)lysine modification.

Belongs to the class-III pyridoxal-phosphate-dependent aminotransferase family. HemL subfamily. In terms of assembly, homodimer. Requires pyridoxal 5'-phosphate as cofactor.

The protein resides in the cytoplasm. The enzyme catalyses (S)-4-amino-5-oxopentanoate = 5-aminolevulinate. It participates in porphyrin-containing compound metabolism; protoporphyrin-IX biosynthesis; 5-aminolevulinate from L-glutamyl-tRNA(Glu): step 2/2. The chain is Glutamate-1-semialdehyde 2,1-aminomutase from Legionella pneumophila (strain Paris).